The following is a 975-amino-acid chain: Translation initiation factor IF-2 (975 aa).

Composition is skewed to basic and acidic residues over residues 48 to 63 (DHLRKSHGATDGDKRK) and 120 to 177 (AELK…EAAA). Disordered stretches follow at residues 48 to 85 (DHLRKSHGATDGDKRKITLTRRHTSEIKQADATGKART) and 98 to 390 (KRDD…PTEP). Residues 178–211 (KRAAAAQAEAAQQAAAAREQAQRAQSEPAEQSAQ) are compositionally biased toward low complexity. A compositionally biased stretch (basic and acidic residues) spans 212 to 263 (DEARAAAERAAQREAAKKAEDAAREAADKARAEQEEIRKRREAAEAEARAIR). Over residues 302-330 (KPAGEAAAARPAAKKPASGAPAPAAAPAG) the composition is skewed to low complexity. Gly residues predominate over residues 359–372 (SSGGVDRGWRGGPK). Residues 475–644 (PRPPVVTVMG…LLQAEVLELK (170 aa)) enclose the tr-type G domain. Positions 484 to 491 (GHVDHGKT) are G1. Residue 484–491 (GHVDHGKT) coordinates GTP. Residues 509–513 (GITQH) are G2. The interval 530 to 533 (DTPG) is G3. GTP contacts are provided by residues 530 to 534 (DTPGH) and 584 to 587 (NKID). A G4 region spans residues 584–587 (NKID). Residues 620-622 (SAK) are G5.

It belongs to the TRAFAC class translation factor GTPase superfamily. Classic translation factor GTPase family. IF-2 subfamily.

The protein resides in the cytoplasm. One of the essential components for the initiation of protein synthesis. Protects formylmethionyl-tRNA from spontaneous hydrolysis and promotes its binding to the 30S ribosomal subunits. Also involved in the hydrolysis of GTP during the formation of the 70S ribosomal complex. This Burkholderia pseudomallei (strain 1106a) protein is Translation initiation factor IF-2.